Reading from the N-terminus, the 257-residue chain is Nickel import system ATP-binding protein NikD (257 aa).

The 242-residue stretch at 4–245 (IDIQNLTIKN…HLHPYTERLI (242 aa)) folds into the ABC transporter domain. Position 37–44 (37–44 (GESGAGKS)) interacts with ATP.

Belongs to the ABC transporter superfamily. The complex is composed of two ATP-binding proteins (NikD and NikE), two transmembrane proteins (NikB and NikC) and a solute-binding protein (NikA).

It localises to the cell membrane. The enzyme catalyses Ni(2+)(out) + ATP + H2O = Ni(2+)(in) + ADP + phosphate + H(+). Its function is as follows. Part of the ABC transporter complex NikABCDE (Opp2) involved in nickel import. Probably responsible for energy coupling to the transport system. In Staphylococcus aureus (strain Mu50 / ATCC 700699), this protein is Nickel import system ATP-binding protein NikD.